A 194-amino-acid chain; its full sequence is Peptidyl-tRNA hydrolase (194 aa).

Y16 provides a ligand contact to tRNA. H21 functions as the Proton acceptor in the catalytic mechanism. TRNA-binding residues include F67, N69, and N115.

Belongs to the PTH family. Monomer.

It is found in the cytoplasm. The enzyme catalyses an N-acyl-L-alpha-aminoacyl-tRNA + H2O = an N-acyl-L-amino acid + a tRNA + H(+). Its function is as follows. Hydrolyzes ribosome-free peptidyl-tRNAs (with 1 or more amino acids incorporated), which drop off the ribosome during protein synthesis, or as a result of ribosome stalling. In terms of biological role, catalyzes the release of premature peptidyl moieties from peptidyl-tRNA molecules trapped in stalled 50S ribosomal subunits, and thus maintains levels of free tRNAs and 50S ribosomes. This Salmonella heidelberg (strain SL476) protein is Peptidyl-tRNA hydrolase.